We begin with the raw amino-acid sequence, 222 residues long: CEACAM1-like protein UL7 (222 aa).

N-linked (GlcNAc...) asparagine; by host glycans are attached at residues Asn-50, Asn-56, Asn-60, Asn-71, Asn-105, Asn-109, Asn-125, Asn-132, Asn-147, Asn-164, Asn-168, and Asn-189. The helical transmembrane segment at 193 to 213 (LALVGVIVFIALIVVCIMGWW) threads the bilayer.

The protein belongs to the RL11 family. As to quaternary structure, interacts with host FLT3. Post-translationally, highly glycosylated.

The protein localises to the secreted. It is found in the host cell membrane. In terms of biological role, plays a role in modulating the host immune response and affecting host cytokine production. Structurally and functionally homolog of host CEACAM1, induces endothelial cell angiogenesis. Ligands for host FLT3 receptor, activates the PI3K/AKT and MAPK/ERK pathways. In turn, triggers hematopoietic progenitor cell and monocyte differentiation leading to virus reactivation. This chain is CEACAM1-like protein UL7 (UL7), found in Human cytomegalovirus (strain AD169) (HHV-5).